The chain runs to 498 residues: Putrescine N-hydroxylase (498 aa).

Residues F23, D43, K45, W50, H51, and Q62 each contribute to the FAD site. 2 residues coordinate NADP(+): Q62 and R104. V127 provides a ligand contact to FAD. Residues S207, R231, Y275, and L309 each coordinate NADP(+). FAD-binding residues include N386, P397, and L399. Residues 443 to 474 (LESNTHSAVTPSKTRQGLNPSAKSVQQPSIEP) show a composition bias toward polar residues. The tract at residues 443–498 (LESNTHSAVTPSKTRQGLNPSAKSVQQPSIEPQTALRIAPTGGNVSALMAPNKEAQ) is disordered.

It belongs to the lysine N(6)-hydroxylase/L-ornithine N(5)-oxygenase family. The cofactor is FAD.

The enzyme catalyses putrescine + NADPH + O2 = N-hydroxyputrescine + NADP(+) + H2O. Its pathway is siderophore biosynthesis. N-hydroxylating monooxygenase involved in the biosynthesis of the siderophore putrebactin. Catalyzes the N-hydroxylation of the aliphatic diamine putrescine into N-hydroxyputrescine (NHP). The chain is Putrescine N-hydroxylase from Shewanella oneidensis (strain ATCC 700550 / JCM 31522 / CIP 106686 / LMG 19005 / NCIMB 14063 / MR-1).